Here is an 85-residue protein sequence, read N- to C-terminus: Hepcidin (85 aa).

The signal sequence occupies residues 1 to 24 (MKTFSVAVAVAVVLAFICLQESSA). A propeptide spanning residues 25–64 (VPANEEQELEQQIYFADPEMPVESCKMPYYMRENRQGSPA) is cleaved from the precursor. 4 disulfide bridges follow: cysteine 66/cysteine 83, cysteine 69/cysteine 72, cysteine 70/cysteine 79, and cysteine 73/cysteine 82.

As to quaternary structure, monomer. In terms of tissue distribution, expressed in all tissues tested, with highest levels of expression in kidney and lowest levels in liver. Intra-peritoneal injection of lipopolysaccharide results in increased expression in heart, spleen and stomach, but not in kidney or liver.

The protein localises to the secreted. Its function is as follows. Seems to act as a signaling molecule involved in the maintenance of iron homeostasis. Seems to be required in conjunction with HFE to regulate both intestinal iron absorption and iron storage in macrophages. In terms of biological role, has very strong antibacterial activity against the marine Gram-negative bacteria V.alginolyticus (MIC=24 uM), V.fluvialis, V.harveyis (MIC=12 uM) and V.parahaemolyticus (MIC=6 uM). Has antibacterial activity against the Gram-negative bacteria A.hydrophila (MIC=6 uM), E.coli (MIC=24 uM), and E.coli BL21(DE3)plysS (MIC=6 uM), and the Gram-positive bacteria B.cereus (MIC=24 uM), B.subtilis (MIC=6 uM), C.glutamicum (MIC=3 uM), M.luteus (MIC=3 uM), M.lysodeikticus, S.aureus (MIC=6 uM) and S.epidermis (MIC=12 uM). Possesses antifungal activity against A.niger (MIC=24 uM), F.graminearum (MIC24 uM) and F.solani (MIC=24 uM), but lacks antifungal activity against the yeasts P.pastoris GS115 and C.albicans. The chain is Hepcidin from Larimichthys crocea (Large yellow croaker).